A 345-amino-acid chain; its full sequence is Succinylglutamate desuccinylase (345 aa).

Zn(2+) contacts are provided by His64, Glu67, and His161. Residue Glu225 is part of the active site.

Belongs to the AspA/AstE family. Succinylglutamate desuccinylase subfamily. It depends on Zn(2+) as a cofactor.

The catalysed reaction is N-succinyl-L-glutamate + H2O = L-glutamate + succinate. The protein operates within amino-acid degradation; L-arginine degradation via AST pathway; L-glutamate and succinate from L-arginine: step 5/5. In terms of biological role, transforms N(2)-succinylglutamate into succinate and glutamate. The chain is Succinylglutamate desuccinylase from Shewanella pealeana (strain ATCC 700345 / ANG-SQ1).